Reading from the N-terminus, the 196-residue chain is Phosphoheptose isomerase (196 aa).

The region spanning 33 to 192 (LIQSLKNGGK…ESECGENGNT (160 aa)) is the SIS domain. 48-50 (NGG) contacts substrate. Zn(2+)-binding residues include histidine 57 and glutamate 61. Residues glutamate 61, 90-91 (ND), 116-118 (STS), serine 121, and glutamine 168 each bind substrate. Residues glutamine 168 and histidine 176 each coordinate Zn(2+).

This sequence belongs to the SIS family. GmhA subfamily. In terms of assembly, homotetramer. Zn(2+) is required as a cofactor.

The protein localises to the cytoplasm. It catalyses the reaction 2 D-sedoheptulose 7-phosphate = D-glycero-alpha-D-manno-heptose 7-phosphate + D-glycero-beta-D-manno-heptose 7-phosphate. It participates in carbohydrate biosynthesis; D-glycero-D-manno-heptose 7-phosphate biosynthesis; D-glycero-alpha-D-manno-heptose 7-phosphate and D-glycero-beta-D-manno-heptose 7-phosphate from sedoheptulose 7-phosphate: step 1/1. In terms of biological role, catalyzes the isomerization of sedoheptulose 7-phosphate in D-glycero-D-manno-heptose 7-phosphate. This is Phosphoheptose isomerase from Helicobacter hepaticus (strain ATCC 51449 / 3B1).